Consider the following 523-residue polypeptide: NAD(P)H-quinone oxidoreductase subunit 2 (523 aa).

13 helical membrane passes run Ala29–Ala49, Trp57–Trp77, Leu94–Trp114, Ala128–Val148, Leu182–Leu202, Ala223–Phe243, Pro255–Leu275, Leu291–Gln311, Met317–Thr337, Val345–Phe365, Leu389–Gly409, Val424–Ile444, and Val477–Phe497.

The protein belongs to the complex I subunit 2 family. In terms of assembly, NDH-1 can be composed of about 15 different subunits; different subcomplexes with different compositions have been identified which probably have different functions.

It localises to the cellular thylakoid membrane. It carries out the reaction a plastoquinone + NADH + (n+1) H(+)(in) = a plastoquinol + NAD(+) + n H(+)(out). It catalyses the reaction a plastoquinone + NADPH + (n+1) H(+)(in) = a plastoquinol + NADP(+) + n H(+)(out). NDH-1 shuttles electrons from an unknown electron donor, via FMN and iron-sulfur (Fe-S) centers, to quinones in the respiratory and/or the photosynthetic chain. The immediate electron acceptor for the enzyme in this species is believed to be plastoquinone. Couples the redox reaction to proton translocation, and thus conserves the redox energy in a proton gradient. Cyanobacterial NDH-1 also plays a role in inorganic carbon-concentration. This is NAD(P)H-quinone oxidoreductase subunit 2 from Synechococcus sp. (strain WH7803).